The primary structure comprises 507 residues: Bifunctional purine biosynthesis protein PurH (507 aa).

The 144-residue stretch at 1–144 (MKRALLSVSD…KNSDSVWAVV (144 aa)) folds into the MGS-like domain.

Belongs to the PurH family.

The catalysed reaction is (6R)-10-formyltetrahydrofolate + 5-amino-1-(5-phospho-beta-D-ribosyl)imidazole-4-carboxamide = 5-formamido-1-(5-phospho-D-ribosyl)imidazole-4-carboxamide + (6S)-5,6,7,8-tetrahydrofolate. The enzyme catalyses IMP + H2O = 5-formamido-1-(5-phospho-D-ribosyl)imidazole-4-carboxamide. It functions in the pathway purine metabolism; IMP biosynthesis via de novo pathway; 5-formamido-1-(5-phospho-D-ribosyl)imidazole-4-carboxamide from 5-amino-1-(5-phospho-D-ribosyl)imidazole-4-carboxamide (10-formyl THF route): step 1/1. It participates in purine metabolism; IMP biosynthesis via de novo pathway; IMP from 5-formamido-1-(5-phospho-D-ribosyl)imidazole-4-carboxamide: step 1/1. This Lacticaseibacillus casei (strain BL23) (Lactobacillus casei) protein is Bifunctional purine biosynthesis protein PurH.